The sequence spans 163 residues: Nucleotide-binding protein cbdbA1256 (163 aa).

The protein belongs to the YajQ family.

Its function is as follows. Nucleotide-binding protein. In Dehalococcoides mccartyi (strain CBDB1), this protein is Nucleotide-binding protein cbdbA1256.